Consider the following 1047-residue polypeptide: [F-actin]-monooxygenase MICAL1 (1047 aa).

The segment at 1-489 (MASPTSTNPA…QDLYDIMDKE (489 aa)) is monooxygenase domain. FAD contacts are provided by residues cysteine 95, 114 to 116 (EKR), 121 to 123 (RHN), phenylalanine 181, tyrosine 293, and aspartate 393. Threonine 475 is subject to Phosphothreonine. The Calponin-homology (CH) domain occupies 507–611 (SAGTEELLHW…YLSHFHSAFK (105 aa)). Serine 616 is subject to Phosphoserine. Residues 644–672 (RTKVEEETPCTEEPPVSEPSVPPALPSEH) are disordered. Positions 659–668 (VSEPSVPPAL) are enriched in pro residues. In terms of domain architecture, LIM zinc-binding spans 679–741 (DVCELCGKRL…LQHLPQEDQK (63 aa)). Zn(2+)-binding residues include cysteine 681, cysteine 684, histidine 702, cysteine 705, cysteine 708, cysteine 711, cysteine 731, and histidine 734. Disordered stretches follow at residues 739–787 (DQKE…QPAR) and 849–872 (EKGE…PPPL). Polar residues predominate over residues 745–767 (NNGSPENQELPTPGDSTTQSGPS). Residues serine 777 and serine 781 each carry the phosphoserine modification. The span at 851–868 (GEEEEEEEEEEEEEEEEL) shows a compositional bias: acidic residues. The bMERB domain maps to 905-1047 (KEEEMKRFCK…EERRLREMPV (143 aa)). The stretch at 912 to 996 (FCKAQAIQRR…LEEKQRQLDH (85 aa)) forms a coiled coil.

The protein belongs to the Mical family. Interacts with STK38 and STK38L. Associates with the SH3 domain of NEDD9. Interacts with VIM and PLXNA3. Interacts with RAB1B, RAB8A, RAB10, RAB13 and RAB15 (in their GTP-bound forms); binding to RAB1B is of low affinity compared to other Rab proteins; at least in case of RAB8A and RAB10 can bind 2 molecules of the Rab proteins simultaneously. Interacts with GRAF1/ARHGAP26, GRAF2/ARHGAP10, RAB8A, RAB8B and RAB10; may bind simultaneously to GRAFs and Rabs and connects GRAFs to Rabs. Does not interact with RAB1 and RAB11A. FAD is required as a cofactor.

The protein resides in the cytoplasm. Its subcellular location is the cytoskeleton. It localises to the endosome membrane. The protein localises to the midbody. It catalyses the reaction L-methionyl-[F-actin] + NADPH + O2 + H(+) = L-methionyl-(R)-S-oxide-[F-actin] + NADP(+) + H2O. The catalysed reaction is NADPH + O2 + H(+) = H2O2 + NADP(+). Functionally, monooxygenase that promotes depolymerization of F-actin by mediating oxidation of specific methionine residues on actin to form methionine-sulfoxide, resulting in actin filament disassembly and preventing repolymerization. In the absence of actin, it also functions as a NADPH oxidase producing H(2)O(2). Acts as a cytoskeletal regulator that connects NEDD9 to intermediate filaments. Also acts as a negative regulator of apoptosis via its interaction with STK38 and STK38L; acts by antagonizing STK38 and STK38L activation by MST1/STK4. Involved in regulation of lamina-specific connectivity in the nervous system such as the development of lamina-restricted hippocampal connections. Through redox regulation of the actin cytoskeleton controls the intracellular distribution of secretory vesicles containing L1/neurofascin/NgCAM family proteins in neurons, thereby regulating their cell surface levels. May act as Rab effector protein and play a role in vesicle trafficking. Promotes endosomal tubule extension by associating with RAB8 (RAB8A or RAB8B), RAB10 and GRAF (GRAF1/ARHGAP26 or GRAF2/ARHGAP10) on the endosomal membrane which may connect GRAFs to Rabs, thereby participating in neosynthesized Rab8-Rab10-Rab11-dependent protein export. The protein is [F-actin]-monooxygenase MICAL1 (Mical1) of Rattus norvegicus (Rat).